The chain runs to 291 residues: MTKAELVKELRTRTQASMSECIKALDASENDIEKAIIWLRENGAIKAANKLKNAATDGVTLAKKVGNKAILIEVNCQTDFVAKNENFLAYANQILEEALAKVESKEDFDKLIINGKPIAESGLDLTAYIGEKIVFRRGEILKANDQQTLGVYTHNNNRVAAIILVDGKVEDEVVRNVAMHAAAMRPRYLNEQVVDQVWLAKEREIIVNQLEHEGKPAAFAAKIIEGRLNKILKENCLVDQSYFKQPELTIEKYLKNNNAVAVGYYSYEVGEGIEKAPQMSFADEVAAQMKK.

Positions 78–81 (TDFV) are involved in Mg(2+) ion dislocation from EF-Tu.

Belongs to the EF-Ts family.

The protein resides in the cytoplasm. Associates with the EF-Tu.GDP complex and induces the exchange of GDP to GTP. It remains bound to the aminoacyl-tRNA.EF-Tu.GTP complex up to the GTP hydrolysis stage on the ribosome. This chain is Elongation factor Ts, found in Ureaplasma urealyticum serovar 10 (strain ATCC 33699 / Western).